A 209-amino-acid polypeptide reads, in one-letter code: Large ribosomal subunit protein uL3 (209 aa).

A disordered region spans residues 127-147 (YSRGPMGHGSKSHRVAGARSA).

Belongs to the universal ribosomal protein uL3 family. Part of the 50S ribosomal subunit. Forms a cluster with proteins L14 and L19.

In terms of biological role, one of the primary rRNA binding proteins, it binds directly near the 3'-end of the 23S rRNA, where it nucleates assembly of the 50S subunit. The polypeptide is Large ribosomal subunit protein uL3 (Finegoldia magna (strain ATCC 29328 / DSM 20472 / WAL 2508) (Peptostreptococcus magnus)).